Consider the following 94-residue polypeptide: Integration host factor subunit beta (94 aa).

The protein belongs to the bacterial histone-like protein family. In terms of assembly, heterodimer of an alpha and a beta chain.

Functionally, this protein is one of the two subunits of integration host factor, a specific DNA-binding protein that functions in genetic recombination as well as in transcriptional and translational control. This is Integration host factor subunit beta (ihfB) from Haemophilus influenzae (strain ATCC 51907 / DSM 11121 / KW20 / Rd).